The primary structure comprises 81 residues: Protein PYP1 (81 aa).

Residues 1 to 25 constitute a chloroplast transit peptide; sequence MAFVSGFTGMPVTARVSKAVCRTRM. The segment at 27-57 is disordered; sequence LEGGKSSGGGEATRDPEPTAVDPNDPKGKQQ.

It localises to the plastid. The protein localises to the chloroplast. The polypeptide is Protein PYP1 (Pyropia yezoensis (Susabi-nori)).